A 256-amino-acid polypeptide reads, in one-letter code: Small ribosomal subunit protein eS1 (256 aa).

A compositionally biased stretch (basic residues) spans 1 to 18; sequence MAVGKNKRLSKGKKGLKK. The tract at residues 1–20 is disordered; sequence MAVGKNKRLSKGKKGLKKRT. Alanine 2 is subject to N-acetylalanine; partial.

This sequence belongs to the eukaryotic ribosomal protein eS1 family. As to quaternary structure, component of the small ribosomal subunit. Mature ribosomes consist of a small (40S) and a large (60S) subunit. The 40S subunit contains about 33 different proteins and 1 molecule of RNA (18S). The 60S subunit contains about 49 different proteins and 3 molecules of RNA (25S, 5.8S and 5S).

It localises to the cytoplasm. The sequence is that of Small ribosomal subunit protein eS1 (rps1) from Talaromyces stipitatus (strain ATCC 10500 / CBS 375.48 / QM 6759 / NRRL 1006) (Penicillium stipitatum).